The chain runs to 438 residues: Xylose isomerase (438 aa).

Residues Asp-306 and Asp-308 each contribute to the Mg(2+) site.

Belongs to the xylose isomerase family. In terms of assembly, homotetramer. The cofactor is Mg(2+).

It is found in the cytoplasm. The enzyme catalyses alpha-D-xylose = alpha-D-xylulofuranose. This is Xylose isomerase from Caldicellulosiruptor bescii (strain ATCC BAA-1888 / DSM 6725 / KCTC 15123 / Z-1320) (Anaerocellum thermophilum).